The primary structure comprises 760 residues: Transmembrane channel-like protein 1 (760 aa).

Positions 1 to 80 (MSPKKVQIKV…RRRRLKRGAE (80 aa)) are disordered. Residues 1 to 182 (MSPKKVQIKV…KIKAIESQFG (182 aa)) lie on the Cytoplasmic side of the membrane. The segment covering 13–29 (KEDETEESSSEEEEEVE) has biased composition (acidic residues). The segment covering 30-39 (DKLPRRESLR) has biased composition (basic and acidic residues). A Phosphoserine modification is found at Ser37. Thr45 carries the phosphothreonine modification. Acidic residues predominate over residues 50–61 (NEDDPEPEPEDE). At Ser128 the chain carries Phosphoserine. The chain crosses the membrane as a helical span at residues 183–220 (SSVASYFLFLRWMYGVNMVLFILTFSLIMLPEYLWGLP). Residues 221 to 271 (YGSLPRKTVPRAEEASAANFGVLYDFNGLAQYSVLFYGYYDNKRTIGWMNF) are Extracellular-facing. The helical transmembrane segment at 272-303 (RLPLSYFLVGIMCIGYSFLVVLKAMTKNIGDD) threads the bilayer. At 304 to 359 (GGGDDNTFNFSWKVFTSWDYLIGNPETADNKFNSITMNFKEAITEEKAAQVEENVH) the chain is on the cytoplasmic side. Residue Ser314 is modified to Phosphoserine. Residues 360 to 390 (LIRFLRFLANFFVFLTLGGSGYLIFWAVKRS) traverse the membrane as a helical segment. Topologically, residues 391–402 (QEFAQQDPDTLG) are extracellular. Thr400 carries the post-translational modification Phosphothreonine. A helical transmembrane segment spans residues 403–430 (WWEKNEMNMVMSLLGMFCPTLFDLFAEL). Topologically, residues 431-434 (EDYH) are cytoplasmic. Residues 435–469 (PLIALKWLLGRIFALLLGNLYVFILALMDEINNKI) traverse the membrane as a helical segment. Residues 470 to 515 (EEEKLVKANITLWEANMIKAYNASFSENSTGPPFFVHPADVPRGPC) are Extracellular-facing. Residues 516–553 (WETMVGQEFVRLTVSDVLTTYVTILIGDFLRACFVRFC) traverse the membrane as a helical segment. The Cytoplasmic portion of the chain corresponds to 554–572 (NYCWCWDLEYGYPSYTEFD). The chain crosses the membrane as a helical span at residues 573-593 (ISGNVLALIFNQGMIWMGSFF). At 594–596 (APS) the chain is on the extracellular side. A helical transmembrane segment spans residues 597–619 (LPGINILRLHTSMYFQCWAVMCC). Topologically, residues 620–633 (NVPEARVFKASRSN) are cytoplasmic. A helical membrane pass occupies residues 634–657 (NFYLGMLLLILFLSTMPVLYMIVS). The Extracellular segment spans residues 658–700 (LPPSFDCGPFSGKNRMFEVIGETLEHDFPSWMAKILRQLSNPG). The chain crosses the membrane as a helical span at residues 701-734 (LVIAVILVMVLAIYYLNATAKGQKAANLDLKKKM). At 735–760 (KMQALENKMRNKKMAAARAAAAAGRQ) the chain is on the cytoplasmic side.

This sequence belongs to the TMC family. As to quaternary structure, forms the MET channel complosed of TMC dimer (TMC1 or TMC2), TMIE, TOMT, CIB (CIB2 or CIB3), LHFPL5 and PDH15. The interaction of TMC1 and TMC2 with TOMT is required for the transportation of TMC1/2 into the stereocilia of hair cells. Interacts (via N-terminus) with both isoforms CD1 and CD3 of PCDH15. Can form a heterodimer with TMC2, TMC5 or TMC7. As to expression, detected in fetal cochlea, and at low levels in placenta and testis.

The protein resides in the cell membrane. It carries out the reaction Ca(2+)(in) = Ca(2+)(out). In terms of biological role, pore-forming subunit of the mechanotransducer (MET) non-selective cation channel complex located at the tips of stereocilia of cochlear hair cells and that mediates sensory transduction in the auditory system. The MET complex is composed of two dimeric pore-forming ion-conducting transmembrane TMC (TMC1 or TMC2) subunits, and aided by several auxiliary proteins including LHFPL5, TMIE, CIB2/3 and TOMT, and the tip-link PCDH15. MET channel is activated by tension in the tip-link extending from the side wall of one stereocilium to the tip of the adjacent shorter stereocilium, where the channel is located. TMC1 MET channel is highly permeable to calcium and likely transports monovalent cations. Also involved in vestibular hair cells transduction current. The chain is Transmembrane channel-like protein 1 from Homo sapiens (Human).